Consider the following 300-residue polypeptide: Ribosomal RNA small subunit methyltransferase A (300 aa).

S-adenosyl-L-methionine is bound by residues N36, V38, G63, E84, D113, and N131.

It belongs to the class I-like SAM-binding methyltransferase superfamily. rRNA adenine N(6)-methyltransferase family. RsmA subfamily.

It localises to the cytoplasm. It carries out the reaction adenosine(1518)/adenosine(1519) in 16S rRNA + 4 S-adenosyl-L-methionine = N(6)-dimethyladenosine(1518)/N(6)-dimethyladenosine(1519) in 16S rRNA + 4 S-adenosyl-L-homocysteine + 4 H(+). Its function is as follows. Specifically dimethylates two adjacent adenosines (A1518 and A1519) in the loop of a conserved hairpin near the 3'-end of 16S rRNA in the 30S particle. May play a critical role in biogenesis of 30S subunits. This chain is Ribosomal RNA small subunit methyltransferase A, found in Kineococcus radiotolerans (strain ATCC BAA-149 / DSM 14245 / SRS30216).